A 264-amino-acid chain; its full sequence is U1 snRNP-associated protein usp106 (264 aa).

The stretch at 83–126 forms a coiled coil; the sequence is DYLEDLERHVDDCNKRIDIAEARREKTKEEEERIDELMRDIIHT. The segment covering 233–258 has biased composition (basic and acidic residues); it reads EDREKSRDKKDGEKQRDNLASFEDKI. Positions 233 to 264 are disordered; the sequence is EDREKSRDKKDGEKQRDNLASFEDKISTSFVA.

This sequence belongs to the Luc7 family. In terms of assembly, component of the U1 snRNP particle, a subcomplex of the spliceosome.

It is found in the cytoplasm. It localises to the nucleus. In terms of biological role, component of the U1 snRNP particle, which recognizes and binds the 5'-splice site of pre-mRNA. Together with other non-snRNP factors, U1 snRNP forms the spliceosomal commitment complex, that targets pre-mRNA to the splicing pathway. This Schizosaccharomyces pombe (strain 972 / ATCC 24843) (Fission yeast) protein is U1 snRNP-associated protein usp106 (usp106).